Reading from the N-terminus, the 240-residue chain is Anti-H(O) lectin (240 aa).

A glycan (N-linked (GlcNAc...) asparagine) is linked at N4. Mn(2+)-binding residues include E124 and D126. D126, Y128, N130, and D133 together coordinate Ca(2+). Mn(2+) contacts are provided by D133 and H141.

Belongs to the leguminous lectin family.

Its function is as follows. L-fucose specific lectin. The chain is Anti-H(O) lectin from Lotus tetragonolobus (Winged pea).